Consider the following 498-residue polypeptide: MEFSVKNGSVEKQRTGCLVVGVYEPRRLSPAAEQLDKLSDGYLSNLLRKGDLEGRVGQTLLLHNVPNVPADRVLLVGCGKERELTERQYKQTIQKMVQVINDTGSTEAICFLTELHVKARSVYWNIRFAIEAIQENGYQYNEFKSVKPEIRRELRKIVFNIANRKDLTVSEQAVEQGKAVALGVIAAKNVANCPPNVCNPKYLSGLAKGLAKEYDNITTTVLDEKEMAALQMNAYLAVSRGSENDAYLSIIEYKGSPNPAAKPIVLVGKGLTFDTGGISIKPSDAMDEMKYDMGGAASVYGTMKAIAEMKLPLNVIGVLAGCENMPDGNAYRPGDILTTMSGLTVEVLNTDAEGRLVLCDTLTYVERFDPELVIDVATLTGACMIALGNHNSGLISPNNTLANDLLNAAEQADDKAWRLPMGEEYQEQLKSNFADLANIGGRLGGAITAGVFLSNFTKKYTWAHLDIAGTAWKSGAAKGATGRPVPLLSQFLINKAGV.

K269 and D274 together coordinate Mn(2+). K281 is a catalytic residue. The Mn(2+) site is built by D292, D351, and E353. R355 is a catalytic residue.

The protein belongs to the peptidase M17 family. It depends on Mn(2+) as a cofactor.

It localises to the cytoplasm. The catalysed reaction is Release of an N-terminal amino acid, Xaa-|-Yaa-, in which Xaa is preferably Leu, but may be other amino acids including Pro although not Arg or Lys, and Yaa may be Pro. Amino acid amides and methyl esters are also readily hydrolyzed, but rates on arylamides are exceedingly low.. It catalyses the reaction Release of an N-terminal amino acid, preferentially leucine, but not glutamic or aspartic acids.. Functionally, presumably involved in the processing and regular turnover of intracellular proteins. Catalyzes the removal of unsubstituted N-terminal amino acids from various peptides. The chain is Probable cytosol aminopeptidase from Glaesserella parasuis serovar 5 (strain SH0165) (Haemophilus parasuis).